A 425-amino-acid polypeptide reads, in one-letter code: Putative type I restriction enzyme MjaX specificity subunit (425 aa).

The protein belongs to the type-I restriction system S methylase family.

In terms of biological role, a putative specificity (S) subunit of a type I restriction enzyme thought to recognize 5'-TAGN(6)TGC-3'; the other subunits are unknown. In Methanocaldococcus jannaschii (strain ATCC 43067 / DSM 2661 / JAL-1 / JCM 10045 / NBRC 100440) (Methanococcus jannaschii), this protein is Putative type I restriction enzyme MjaX specificity subunit.